A 116-amino-acid chain; its full sequence is Ribonuclease P protein component (116 aa).

It belongs to the RnpA family. Consists of a catalytic RNA component (M1 or rnpB) and a protein subunit.

The catalysed reaction is Endonucleolytic cleavage of RNA, removing 5'-extranucleotides from tRNA precursor.. In terms of biological role, RNaseP catalyzes the removal of the 5'-leader sequence from pre-tRNA to produce the mature 5'-terminus. It can also cleave other RNA substrates such as 4.5S RNA. The protein component plays an auxiliary but essential role in vivo by binding to the 5'-leader sequence and broadening the substrate specificity of the ribozyme. The chain is Ribonuclease P protein component from Leuconostoc citreum (strain KM20).